The sequence spans 290 residues: NAD kinase (290 aa).

Aspartate 73 acts as the Proton acceptor in catalysis. Residues 73–74 (DG), 147–148 (ND), arginine 158, arginine 175, aspartate 177, 188–193 (TAYALS), and glutamine 246 contribute to the NAD(+) site.

Belongs to the NAD kinase family. It depends on a divalent metal cation as a cofactor.

The protein localises to the cytoplasm. The enzyme catalyses NAD(+) + ATP = ADP + NADP(+) + H(+). Involved in the regulation of the intracellular balance of NAD and NADP, and is a key enzyme in the biosynthesis of NADP. Catalyzes specifically the phosphorylation on 2'-hydroxyl of the adenosine moiety of NAD to yield NADP. This Thiobacillus denitrificans (strain ATCC 25259 / T1) protein is NAD kinase.